A 479-amino-acid chain; its full sequence is ATP synthase subunit beta (479 aa).

153–160 is an ATP binding site; the sequence is GGAGVGKT.

The protein belongs to the ATPase alpha/beta chains family. As to quaternary structure, F-type ATPases have 2 components, CF(1) - the catalytic core - and CF(0) - the membrane proton channel. CF(1) has five subunits: alpha(3), beta(3), gamma(1), delta(1), epsilon(1). CF(0) has three main subunits: a(1), b(2) and c(9-12). The alpha and beta chains form an alternating ring which encloses part of the gamma chain. CF(1) is attached to CF(0) by a central stalk formed by the gamma and epsilon chains, while a peripheral stalk is formed by the delta and b chains.

It is found in the cell membrane. The enzyme catalyses ATP + H2O + 4 H(+)(in) = ADP + phosphate + 5 H(+)(out). Increases 2-fold following exposure to low pH. In terms of biological role, produces ATP from ADP in the presence of a proton gradient across the membrane. The catalytic sites are hosted primarily by the beta subunits. This chain is ATP synthase subunit beta, found in Lactobacillus acidophilus (strain ATCC 700396 / NCK56 / N2 / NCFM).